The primary structure comprises 463 residues: Glutamate--tRNA ligase (463 aa).

A 'HIGH' region motif is present at residues 10-20; the sequence is PSPTGHLHIGG. The 'KMSKS' region signature appears at 236–240; it reads KLSKR. K239 contacts ATP.

This sequence belongs to the class-I aminoacyl-tRNA synthetase family. Glutamate--tRNA ligase type 1 subfamily. Monomer.

The protein localises to the cytoplasm. It catalyses the reaction tRNA(Glu) + L-glutamate + ATP = L-glutamyl-tRNA(Glu) + AMP + diphosphate. Its function is as follows. Catalyzes the attachment of glutamate to tRNA(Glu) in a two-step reaction: glutamate is first activated by ATP to form Glu-AMP and then transferred to the acceptor end of tRNA(Glu). The protein is Glutamate--tRNA ligase of Nitratidesulfovibrio vulgaris (strain ATCC 29579 / DSM 644 / CCUG 34227 / NCIMB 8303 / VKM B-1760 / Hildenborough) (Desulfovibrio vulgaris).